The primary structure comprises 111 residues: MQLLSSLVSLLLVLYSVRAAAVLPVEERNPAQSRELSKERKELILKLISGLLDGVDNSVLDGEIAPVPFDAEEPLESRLEERAVYNRLSQLPQRDRKAPCKNFFWKTFTSC.

The first 19 residues, 1 to 19, serve as a signal peptide directing secretion; that stretch reads MQLLSSLVSLLLVLYSVRA. Residues 20 to 87 constitute a propeptide that is removed on maturation; that stretch reads AAVLPVEERN…RLEERAVYNR (68 aa). Cys100 and Cys111 form a disulfide bridge.

Belongs to the somatostatin family.

The protein resides in the secreted. Somatostatin inhibits the release of somatotropin. The protein is Somatostatin-1B (sst1b) of Carassius auratus (Goldfish).